The sequence spans 147 residues: MDEFDRRLLNRLQHGLPLEPHPYALLAAELDCREEDILRRLDDLLDDGTLTRFGPLFDIEPLGGAFTLAAMSVPEARFEEIAALLAGWPQVAHNYRREHALNMWLVVACDSPAEVAETLARLERESGLAVLDLPKEATYHVGLHFPL.

The protein belongs to the Ahb/Nir family. In terms of assembly, probably forms a complex composed of NirD, NirL, NirG and NirH. All proteins are required for the total conversion of siroheme to didecarboxysiroheme.

It carries out the reaction siroheme + 2 H(+) = 12,18-didecarboxysiroheme + 2 CO2. The protein operates within porphyrin-containing compound metabolism. Functionally, involved in heme d1 biosynthesis. Catalyzes the decarboxylation of siroheme into didecarboxysiroheme. In Pseudomonas aeruginosa (strain ATCC 15692 / DSM 22644 / CIP 104116 / JCM 14847 / LMG 12228 / 1C / PRS 101 / PAO1), this protein is Siroheme decarboxylase NirG subunit.